We begin with the raw amino-acid sequence, 349 residues long: MIEFDNLTYLHGKPQGTGLLKANPEDFVVVEDLGFEPDGEGEHILVRILKNGCNTRFVADALAKFLKIHAREVSFAGQKDKHAVTEQWLCARVPGKEMPDLSAFQLEGCQVLEYARHKRKLRLGALKGNAFTLVLREVSNRDDVEQRLIDICVKGVPNYFGAQRFGIGGSNLQGAQRWAQTNTPVRDRNKRSFWLSAARSALFNQIVAERLKKADVNQVVDGDALQLAGRGSWFVATTEELAELQRRVNDKELMITAALPGSGEWGTQREALAFEKAAVAAETELQALLVREKVEAARRAMLLYPQQLSWNWWDDVTVEIRFWLPAGSFATSVVRELINTTGDYAHIAE.

F27 is a substrate binding site. The active-site Nucleophile is the D80. Position 129 (N129) interacts with substrate. Positions 155–303 (GVPNYFGAQR…VEAARRAMLL (149 aa)) constitute a TRUD domain. F329 provides a ligand contact to substrate.

The protein belongs to the pseudouridine synthase TruD family.

It catalyses the reaction uridine(13) in tRNA = pseudouridine(13) in tRNA. Functionally, responsible for synthesis of pseudouridine from uracil-13 in transfer RNAs. This Shigella sonnei (strain Ss046) protein is tRNA pseudouridine synthase D.